A 389-amino-acid polypeptide reads, in one-letter code: Allantoicase (389 aa).

Belongs to the allantoicase family.

The catalysed reaction is allantoate + H2O = (S)-ureidoglycolate + urea. Its pathway is nitrogen metabolism; (S)-allantoin degradation; (S)-ureidoglycolate from allantoate (aminidohydrolase route): step 1/1. Functionally, utilization of purines as secondary nitrogen sources, when primary sources are limiting. The sequence is that of Allantoicase (allc) from Xenopus tropicalis (Western clawed frog).